A 74-amino-acid chain; its full sequence is U-scoloptoxin(09)-Sm3a (74 aa).

The signal sequence occupies residues 1–22 (MNANSIFLCFFIMLIGCTLTHS).

The protein belongs to the scoloptoxin-09 family. Post-translationally, contains 3 disulfide bonds. As to expression, expressed by the venom gland.

It is found in the secreted. The chain is U-scoloptoxin(09)-Sm3a from Scolopendra morsitans (Tanzanian blue ringleg centipede).